Here is a 200-residue protein sequence, read N- to C-terminus: Cuticle protein 19.8 (200 aa).

Repeat copies occupy residues 20-23 (AAPA), 26-29 (AAPA), and 43-46 (AAPA). One can recognise a Chitin-binding type R&amp;R domain in the interval 56-127 (HPQYSYGYSV…EPGVHAPIAA (72 aa)). The disordered stretch occupies residues 70 to 89 (TGDSKSQQESRDGDVVQGSY). 5 consecutive repeat copies span residues 126–129 (AAPV), 144–147 (AAPA), 150–153 (AAPV), 159–162 (AAPA), and 177–180 (AAPA).

In terms of biological role, component of the cuticle of migratory locust which contains more than 100 different structural proteins. The chain is Cuticle protein 19.8 from Locusta migratoria (Migratory locust).